Consider the following 488-residue polypeptide: Envelope glycoprotein gp62 (488 aa).

Positions 1–20 (MGKFLATLILFFQFCPLILS) are cleaved as a signal peptide. The Extracellular segment spans residues 21 to 442 (DYSPSCCTLT…LGLSQWAREA (422 aa)). Asparagine 140 and asparagine 222 each carry an N-linked (GlcNAc...) asparagine; by host glycan. The CXXC motif lies at 225–228 (CIVC). 3 cysteine pairs are disulfide-bonded: cysteine 225-cysteine 228, cysteine 225-cysteine 401, and cysteine 393-cysteine 400. N-linked (GlcNAc...) asparagine; by host glycans are attached at residues asparagine 244 and asparagine 272. The segment at 313 to 333 (AVPVAVWLVSALAMGAGMAGG) is fusion peptide. Coiled-coil stretches lie at residues 341–387 (ASGR…LLFW) and 397–429 (QEQC…GWGL). The interval 376–392 (AQNRRGLDLLFWEQGGL) is immunosuppression. The CX6CC motif lies at 393–401 (CKALQEQCC). Asparagine 404 is a glycosylation site (N-linked (GlcNAc...) asparagine; by host). A helical membrane pass occupies residues 443–463 (LQTGITLVALLLLVILAGPCI). Cysteine 462 carries S-palmitoyl cysteine; by host lipidation. The Cytoplasmic segment spans residues 464–488 (LRQLRHLPSRVRYPHYSLINPESSL).

The mature envelope protein (Env) consists of a trimer of SU-TM heterodimers attached by a labile interchain disulfide bond. In terms of processing, specific enzymatic cleavages in vivo yield mature proteins. Envelope glycoproteins are synthesized as an inactive precursor that is N-glycosylated and processed likely by host cell furin or by a furin-like protease in the Golgi to yield the mature SU and TM proteins. The cleavage site between SU and TM requires the minimal sequence [KR]-X-[KR]-R. Post-translationally, the CXXC motif is highly conserved across a broad range of retroviral envelope proteins. It is thought to participate in the formation of a labile disulfide bond possibly with the CX6CC motif present in the transmembrane protein. Isomerization of the intersubunit disulfide bond to an SU intrachain disulfide bond is thought to occur upon receptor recognition in order to allow membrane fusion. The transmembrane protein is palmitoylated.

Its subcellular location is the virion membrane. It localises to the host cell membrane. Functionally, the surface protein (SU) attaches the virus to the host cell by binding to its receptor. This interaction triggers the refolding of the transmembrane protein (TM) and is thought to activate its fusogenic potential by unmasking its fusion peptide. Fusion occurs at the host cell plasma membrane. In terms of biological role, the transmembrane protein (TM) acts as a class I viral fusion protein. Under the current model, the protein has at least 3 conformational states: pre-fusion native state, pre-hairpin intermediate state, and post-fusion hairpin state. During viral and target cell membrane fusion, the coiled coil regions (heptad repeats) assume a trimer-of-hairpins structure, positioning the fusion peptide in close proximity to the C-terminal region of the ectodomain. The formation of this structure appears to drive apposition and subsequent fusion of viral and target cell membranes. Membranes fusion leads to delivery of the nucleocapsid into the cytoplasm. In Human T-cell leukemia virus 1 (isolate Zaire EL subtype B) (HTLV-1), this protein is Envelope glycoprotein gp62 (env).